We begin with the raw amino-acid sequence, 206 residues long: LexA repressor (206 aa).

Positions 28–48 form a DNA-binding region, H-T-H motif; sequence RAEIARELGFRSANAAEEHLK. Catalysis depends on for autocatalytic cleavage activity residues S123 and K160.

It belongs to the peptidase S24 family. In terms of assembly, homodimer.

It carries out the reaction Hydrolysis of Ala-|-Gly bond in repressor LexA.. Its function is as follows. Represses a number of genes involved in the response to DNA damage (SOS response), including recA and lexA. In the presence of single-stranded DNA, RecA interacts with LexA causing an autocatalytic cleavage which disrupts the DNA-binding part of LexA, leading to derepression of the SOS regulon and eventually DNA repair. This chain is LexA repressor, found in Vibrio atlanticus (strain LGP32) (Vibrio splendidus (strain Mel32)).